The following is a 54-amino-acid chain: Large ribosomal subunit protein bL32c (54 aa).

This sequence belongs to the bacterial ribosomal protein bL32 family.

The protein localises to the plastid. Its subcellular location is the chloroplast. The sequence is that of Large ribosomal subunit protein bL32c from Gossypium barbadense (Sea Island cotton).